A 459-amino-acid chain; its full sequence is Exodeoxyribonuclease 7 large subunit (459 aa).

The protein belongs to the XseA family. In terms of assembly, heterooligomer composed of large and small subunits.

The protein resides in the cytoplasm. It catalyses the reaction Exonucleolytic cleavage in either 5'- to 3'- or 3'- to 5'-direction to yield nucleoside 5'-phosphates.. In terms of biological role, bidirectionally degrades single-stranded DNA into large acid-insoluble oligonucleotides, which are then degraded further into small acid-soluble oligonucleotides. This chain is Exodeoxyribonuclease 7 large subunit, found in Pseudomonas aeruginosa (strain LESB58).